The following is a 338-amino-acid chain: Phenylalanine--tRNA ligase alpha subunit (338 aa).

Glu-259 is a binding site for Mg(2+).

The protein belongs to the class-II aminoacyl-tRNA synthetase family. Phe-tRNA synthetase alpha subunit type 1 subfamily. As to quaternary structure, tetramer of two alpha and two beta subunits. Mg(2+) is required as a cofactor.

The protein localises to the cytoplasm. It carries out the reaction tRNA(Phe) + L-phenylalanine + ATP = L-phenylalanyl-tRNA(Phe) + AMP + diphosphate + H(+). The sequence is that of Phenylalanine--tRNA ligase alpha subunit from Herminiimonas arsenicoxydans.